The chain runs to 149 residues: UPF0102 protein Bpro_0391 (149 aa).

The interval 1-30 (MWFSRKQVVKPPPDGSRAQPGQVTTKSRGD) is disordered.

This sequence belongs to the UPF0102 family.

This is UPF0102 protein Bpro_0391 from Polaromonas sp. (strain JS666 / ATCC BAA-500).